The following is an 89-amino-acid chain: uncharacterized protein (89 aa).

To Synechocystis PCC 6803 slr1025.

This is an uncharacterized protein from Ureaplasma parvum serovar 3 (strain ATCC 700970).